The sequence spans 296 residues: MDAKQTRQGVLLALAAYFIWGIAPAYFKLIYYVPADEILTHRVIWSFFFMVVLMSICRQWSYLKTLIQTPQKIFMLAVSAVLIGGNWLLFIWAVNNHHMLEASLGYFINPLVNIVLGMIFLGERFRRMQWLAVILAICGVLVQLWTFGSLPIIALGLAFSFAFYGLVRKKIAVEAQTGMLIETMWLLPVAAIYLFAIADSSTSHMGQNPMSLNLLLIAAGIVTTVPLLCFTAAATRLRLSTLGFFQYIGPTLMFLLAVTFYGEKPGADKMVTFAFIWVALAIFVMDAIYTQRRTSK.

Topologically, residues 1–11 are cytoplasmic; that stretch reads MDAKQTRQGVL. A helical membrane pass occupies residues 12 to 34; that stretch reads LALAAYFIWGIAPAYFKLIYYVP. Residues 18 to 145 enclose the EamA domain; sequence FIWGIAPAYF…AICGVLVQLW (128 aa). The Periplasmic portion of the chain corresponds to 35 to 37; that stretch reads ADE. Residues 38–60 form a helical membrane-spanning segment; that stretch reads ILTHRVIWSFFFMVVLMSICRQW. The Cytoplasmic segment spans residues 61 to 72; that stretch reads SYLKTLIQTPQK. A helical transmembrane segment spans residues 73–95; sequence IFMLAVSAVLIGGNWLLFIWAVN. The Periplasmic segment spans residues 96–99; it reads NHHM. Residues 100-122 traverse the membrane as a helical segment; the sequence is LEASLGYFINPLVNIVLGMIFLG. The Cytoplasmic segment spans residues 123-128; sequence ERFRRM. Residues 129-146 form a helical membrane-spanning segment; sequence QWLAVILAICGVLVQLWT. The Periplasmic portion of the chain corresponds to 147 to 149; it reads FGS. The helical transmembrane segment at 150 to 167 threads the bilayer; the sequence is LPIIALGLAFSFAFYGLV. Residues 168–179 lie on the Cytoplasmic side of the membrane; sequence RKKIAVEAQTGM. Residues 180–197 form a helical membrane-spanning segment; sequence LIETMWLLPVAAIYLFAI. Topologically, residues 198–211 are periplasmic; it reads ADSSTSHMGQNPMS. The helical transmembrane segment at 212–234 threads the bilayer; it reads LNLLLIAAGIVTTVPLLCFTAAA. Residues 235–238 are Cytoplasmic-facing; it reads TRLR. A helical transmembrane segment spans residues 239-261; the sequence is LSTLGFFQYIGPTLMFLLAVTFY. The Periplasmic portion of the chain corresponds to 262 to 270; that stretch reads GEKPGADKM. The helical transmembrane segment at 271-290 threads the bilayer; it reads VTFAFIWVALAIFVMDAIYT. At 291-296 the chain is on the cytoplasmic side; the sequence is QRRTSK.

This sequence belongs to the EamA transporter family.

It localises to the cell inner membrane. The chain is Protein RarD (rarD) from Escherichia coli (strain K12).